A 338-amino-acid polypeptide reads, in one-letter code: Nuclear hormone receptor family member nhr-52 (338 aa).

Positions 1 to 75 (MKCLVCCSYA…IGMRFSEPKQ (75 aa)) form a DNA-binding region, nuclear receptor. NR C4-type zinc fingers lie at residues 3–23 (CLVC…CSAC) and 39–63 (CKYD…FKKC). The NR LBD domain occupies 98–337 (KDGVHYSNFL…KKLVNDIIIR (240 aa)).

Belongs to the nuclear hormone receptor family.

It is found in the nucleus. Orphan nuclear receptor. The polypeptide is Nuclear hormone receptor family member nhr-52 (nhr-52) (Caenorhabditis elegans).